The following is a 124-amino-acid chain: Large ribosomal subunit protein bL12 (124 aa).

This sequence belongs to the bacterial ribosomal protein bL12 family. In terms of assembly, homodimer. Part of the ribosomal stalk of the 50S ribosomal subunit. Forms a multimeric L10(L12)X complex, where L10 forms an elongated spine to which 2 to 4 L12 dimers bind in a sequential fashion. Binds GTP-bound translation factors.

Its function is as follows. Forms part of the ribosomal stalk which helps the ribosome interact with GTP-bound translation factors. Is thus essential for accurate translation. The protein is Large ribosomal subunit protein bL12 of Akkermansia muciniphila (strain ATCC BAA-835 / DSM 22959 / JCM 33894 / BCRC 81048 / CCUG 64013 / CIP 107961 / Muc).